The following is a 78-amino-acid chain: Protein SlyX homolog (78 aa).

The protein belongs to the SlyX family.

This Xanthomonas oryzae pv. oryzae (strain MAFF 311018) protein is Protein SlyX homolog.